A 230-amino-acid polypeptide reads, in one-letter code: Urease accessory protein UreE (230 aa).

Basic and acidic residues-rich tracts occupy residues 182 to 193 (HVHVDSPLDEPH) and 204 to 230 (SHGD…DHKH). Residues 182–230 (HVHVDSPLDEPHGSGLHVHAIHSHGDGHSHSHSHDHDHDHRHDDHDHKH) are disordered.

The protein belongs to the UreE family.

The protein resides in the cytoplasm. In terms of biological role, involved in urease metallocenter assembly. Binds nickel. Probably functions as a nickel donor during metallocenter assembly. The polypeptide is Urease accessory protein UreE (Yersinia mollaretii).